Reading from the N-terminus, the 560-residue chain is Kinesin light chain 1 (560 aa).

Residues Lys27–Lys156 are a coiled coil. The span at Lys156–Leu176 shows a compositional bias: basic and acidic residues. Residues Lys156–Gln203 form a disordered region. Ser162 is modified (phosphoserine). Residues Gly188–Gln203 are compositionally biased toward low complexity. 5 TPR repeats span residues Leu213 to Thr246, Ala255 to Thr288, Ala297 to Val330, Ala339 to Lys372, and Ala381 to Arg414. Tyr449 is subject to Phosphotyrosine. Position 460 is a phosphoserine (Ser460). One copy of the TPR 6 repeat lies at Thr464–Gly497. Residues Ser521 and Ser524 each carry the phosphoserine modification.

Belongs to the kinesin light chain family. In terms of assembly, oligomeric complex composed of two heavy chains and two light chains. Interacts with SPAG9. Interacts with ATCAY; may link mitochondria to KLC1 and regulate mitochondria localization into neuron projections. Interacts (via TPR repeats) with TOR1A; the interaction associates TOR1A with the kinesin oligomeric complex. Interacts with BORCS5. Interacts with MAPK8IP3/JIP3 and NTRK2/TRKB; interaction with NTRK2/TRKB is mediated by MAPK8IP3/JIP3. Interacts with CLSTN1; phosphorylation at Ser-460 inhibits interaction with CLSTN1. Post-translationally, phosphorylation at Ser-460 by ERK inhibits interaction with CLSTN1 and localization to cytoplasmic vesicles. Expressed in brain (at protein level).

The protein localises to the cell projection. It is found in the growth cone. Its subcellular location is the cytoplasmic vesicle. It localises to the cytoplasm. The protein resides in the cytoskeleton. In terms of biological role, kinesin is a microtubule-associated force-producing protein that may play a role in organelle transport. The light chain may function in coupling of cargo to the heavy chain or in the modulation of its ATPase activity. This Rattus norvegicus (Rat) protein is Kinesin light chain 1 (Klc1).